We begin with the raw amino-acid sequence, 444 residues long: Exodeoxyribonuclease 7 large subunit (444 aa).

This sequence belongs to the XseA family. In terms of assembly, heterooligomer composed of large and small subunits.

The protein localises to the cytoplasm. The catalysed reaction is Exonucleolytic cleavage in either 5'- to 3'- or 3'- to 5'-direction to yield nucleoside 5'-phosphates.. Bidirectionally degrades single-stranded DNA into large acid-insoluble oligonucleotides, which are then degraded further into small acid-soluble oligonucleotides. The protein is Exodeoxyribonuclease 7 large subunit of Xylella fastidiosa (strain 9a5c).